Here is a 158-residue protein sequence, read N- to C-terminus: Phosphopantetheine adenylyltransferase (158 aa).

Thr-9 contributes to the substrate binding site. ATP contacts are provided by residues Thr-9 to Phe-10 and His-17. Substrate is bound by residues Lys-41, Leu-73, and Arg-87. ATP is bound by residues Gly-88 to Arg-90, Glu-98, and Trp-123 to Thr-129.

This sequence belongs to the bacterial CoaD family. As to quaternary structure, homohexamer. Requires Mg(2+) as cofactor.

It is found in the cytoplasm. The catalysed reaction is (R)-4'-phosphopantetheine + ATP + H(+) = 3'-dephospho-CoA + diphosphate. Its pathway is cofactor biosynthesis; coenzyme A biosynthesis; CoA from (R)-pantothenate: step 4/5. Reversibly transfers an adenylyl group from ATP to 4'-phosphopantetheine, yielding dephospho-CoA (dPCoA) and pyrophosphate. The protein is Phosphopantetheine adenylyltransferase of Pasteurella multocida (strain Pm70).